The chain runs to 434 residues: V-type ATP synthase beta chain (434 aa).

Belongs to the ATPase alpha/beta chains family.

Its function is as follows. Produces ATP from ADP in the presence of a proton gradient across the membrane. The V-type beta chain is a regulatory subunit. The polypeptide is V-type ATP synthase beta chain (Borrelia garinii subsp. bavariensis (strain ATCC BAA-2496 / DSM 23469 / PBi) (Borreliella bavariensis)).